Reading from the N-terminus, the 409-residue chain is Divalent metal cation transporter MntH (409 aa).

A run of 11 helical transmembrane segments spans residues 19–39 (LSLM…GNFA), 46–66 (ATFG…AMLV), 98–118 (WVQA…GAAI), 122–142 (LLFG…TFLI), 155–175 (LVIG…LIFS), 196–216 (AVFL…IYLH), 241–261 (IAMT…AAAF), 290–310 (VFGL…TLAG), 320–340 (FYIP…IVIL), 348–368 (ILVM…VPLL), and 388–408 (ILGK…LISL).

Belongs to the NRAMP family.

Its subcellular location is the cell inner membrane. H(+)-stimulated, divalent metal cation uptake system. The sequence is that of Divalent metal cation transporter MntH from Yersinia pseudotuberculosis serotype O:1b (strain IP 31758).